Here is a 54-residue protein sequence, read N- to C-terminus: Large ribosomal subunit protein bL33B (54 aa).

Belongs to the bacterial ribosomal protein bL33 family.

This is Large ribosomal subunit protein bL33B from Saccharopolyspora erythraea (strain ATCC 11635 / DSM 40517 / JCM 4748 / NBRC 13426 / NCIMB 8594 / NRRL 2338).